The chain runs to 113 residues: N-alpha-acetyltransferase 38-A, NatC auxiliary subunit (113 aa).

The disordered stretch occupies residues 1-29 (MAAVLEENGCSRQSSPSAGDSDAEPGDTA). One can recognise a Sm domain in the interval 28-106 (TARHKLESLL…IVSIQVELES (79 aa)).

This sequence belongs to the snRNP Sm proteins family. Component of the N-terminal acetyltransferase C (NatC) complex, which is composed of naa35, naa38 and naa30.

It localises to the cytoplasm. Its function is as follows. Auxillary component of the N-terminal acetyltransferase C (NatC) complex which catalyzes acetylation of N-terminal methionine residues. The protein is N-alpha-acetyltransferase 38-A, NatC auxiliary subunit (naa38-a) of Xenopus laevis (African clawed frog).